We begin with the raw amino-acid sequence, 206 residues long: Pyridoxine/pyridoxamine 5'-phosphate oxidase (206 aa).

Residues 53 to 58 (RMVLLK), 68 to 69 (YT), lysine 75, and glutamine 97 each bind FMN. A substrate-binding site is contributed by lysine 58. Positions 115, 119, and 123 each coordinate substrate. Residues 132–133 (QS) and tryptophan 177 contribute to the FMN site. 183–185 (RLH) is a substrate binding site. Arginine 187 provides a ligand contact to FMN.

This sequence belongs to the pyridoxamine 5'-phosphate oxidase family. As to quaternary structure, homodimer. The cofactor is FMN.

The enzyme catalyses pyridoxamine 5'-phosphate + O2 + H2O = pyridoxal 5'-phosphate + H2O2 + NH4(+). It catalyses the reaction pyridoxine 5'-phosphate + O2 = pyridoxal 5'-phosphate + H2O2. The protein operates within cofactor metabolism; pyridoxal 5'-phosphate salvage; pyridoxal 5'-phosphate from pyridoxamine 5'-phosphate: step 1/1. It participates in cofactor metabolism; pyridoxal 5'-phosphate salvage; pyridoxal 5'-phosphate from pyridoxine 5'-phosphate: step 1/1. Functionally, catalyzes the oxidation of either pyridoxine 5'-phosphate (PNP) or pyridoxamine 5'-phosphate (PMP) into pyridoxal 5'-phosphate (PLP). The protein is Pyridoxine/pyridoxamine 5'-phosphate oxidase of Rhizobium johnstonii (strain DSM 114642 / LMG 32736 / 3841) (Rhizobium leguminosarum bv. viciae).